Consider the following 358-residue polypeptide: HTH-type transcriptional regulator IpsA (358 aa).

One can recognise an HTH lacI-type domain in the interval 8 to 63; sequence GTLASIAAKLGISRTTVSNAYNRPEQLSAELRQRILDTAEDMGYLGPDPVARSLRT. The H-T-H motif DNA-binding region spans 10–29; it reads LASIAAKLGISRTTVSNAYN.

As to quaternary structure, homodimer.

Its activity is regulated as follows. Myo-inositol causes the dissociation of the IpsA-DNA complex in vitro. Plays a role in the regulation of cell wall biogenesis. Inositol-dependent transcriptional activator of ino1, which encodes inositol phosphate synthase. Also regulates other target genes, which are most likely involved in the synthesis of inositol-derived cell wall components and mycothiol. Acts by binding to a conserved palindromic motif within the promoter regions. The polypeptide is HTH-type transcriptional regulator IpsA (Corynebacterium glutamicum (strain ATCC 13032 / DSM 20300 / JCM 1318 / BCRC 11384 / CCUG 27702 / LMG 3730 / NBRC 12168 / NCIMB 10025 / NRRL B-2784 / 534)).